The chain runs to 125 residues: Histone H2A, orphon (125 aa).

The span at 1–18 shows a compositional bias: basic residues; that stretch reads MSGRGKGGKVKAKAKSRS. Positions 1 to 21 are disordered; it reads MSGRGKGGKVKAKAKSRSSRA. Position 2 is an N-acetylserine (Ser2). Residue Ser2 is modified to Phosphoserine. Residue Lys119 forms a Glycyl lysine isopeptide (Lys-Gly) (interchain with G-Cter in ubiquitin) linkage.

It belongs to the histone H2A family. In terms of assembly, the nucleosome is a histone octamer containing two molecules each of H2A, H2B, H3 and H4 assembled in one H3-H4 heterotetramer and two H2A-H2B heterodimers. The octamer wraps approximately 147 bp of DNA. Post-translationally, monoubiquitination of Lys-119 gives a specific tag for epigenetic transcriptional repression. In terms of processing, phosphorylation on Ser-2 is enhanced during mitosis. Phosphorylation on Ser-2 directly represses transcription.

The protein resides in the nucleus. Its subcellular location is the chromosome. Functionally, core component of nucleosome. Nucleosomes wrap and compact DNA into chromatin, limiting DNA accessibility to the cellular machineries which require DNA as a template. Histones thereby play a central role in transcription regulation, DNA repair, DNA replication and chromosomal stability. DNA accessibility is regulated via a complex set of post-translational modifications of histones, also called histone code, and nucleosome remodeling. The protein is Histone H2A, orphon of Chironomus thummi thummi (Midge).